Here is a 574-residue protein sequence, read N- to C-terminus: FAD-linked oxidoreductase penH (574 aa).

The N-terminal stretch at 1–25 (MLPRALTLSALLALLLAIYLALAPA) is a signal peptide. Residues asparagine 48, asparagine 107, asparagine 193, asparagine 368, and asparagine 385 are each glycosylated (N-linked (GlcNAc...) asparagine). The region spanning 121-305 (HQGRIPLYAA…VRVTMRTYPD (185 aa)) is the FAD-binding PCMH-type domain.

This sequence belongs to the oxygen-dependent FAD-linked oxidoreductase family. Requires FAD as cofactor.

The enzyme catalyses peniprequinolone + A = yaequinolone E + AH2. It functions in the pathway secondary metabolite biosynthesis. It participates in alkaloid biosynthesis. Its pathway is mycotoxin biosynthesis. Its function is as follows. FAD-linked oxidoreductase; part of the gene cluster that mediates the biosynthesis of penigequinolones, potent insecticidal alkaloids that contain a highly modified 10-carbon prenyl group. The first stage is catalyzed by the nonribosomal peptide synthetase penN that condenses anthranilic acid and O-methyl-L-tyrosine to produce 4'-methoxycyclopeptin. 4'-methoxycyclopeptin is then converted to 4'-methoxydehydrocyclopeptin by the ketoglutarate-dependent dioxygenase penM through dehydrogenation to form a double bond between C-alpha and C-beta of the O-methyltyrosine side chain. PenM also converts its first product methoxydehydrocyclopeptin to 4'-methoxycyclopenin. The following conversion of 4'methoxycyclopenin into 4'-methoxyviridicatin is catalyzed by the cyclopenase penL. 4'-methoxyviridicatin is the precursor of quinolone natural products, and is further converted to quinolinone B. The prenyltransferase penI then catalyzes the canonical Friedel-Crafts alkylation of quinolinone B with dimethylallyl cation to yield dimethylallyl quinolone, which is subjected to FAD-dependent dehydrogenation by the FAD-linked oxidoreductase penH to yield conjugated aryl diene. The delta(3') double bond then serves as the site of the second alkylation with DMAPP catalyzed by the prenyltransferase penG to yield a carbenium ion intermediate, which can be attacked by H(2)O to yield a styrenyl quinolone containing a C3'-hydroxyprenyl chain, or undergo cyclization to yield yaequinolones J1 and J2. The conversion of the styrenyl quinolone into the tetrahydrofuran-containing yaequinolone C is performed by the FAD-dependent monooxygenase penE and involves epoxidation of the terminal C7'-C8' olefin, followed by epoxide ring opening initiated by the C3' hydroxyl group. The predicted cysteine hydrolase penJ acts as an epoxide hydrolase that enhances the rate of the 5-exo-tet cyclization step, increasing the yield of yaequinolone C. PenF catalyzes the cationic rearrangement of the epoxide formed by penE (before ring opening to produce yaequinolone C) into yaequinolone D. Finally, the short-chain dehydrogenase/reductase (SDR)-like reductase penD, catalyzes both the dehydration of yaequinolone D and the reduction of the resulting oxonium to yield penigequinolone. The chain is FAD-linked oxidoreductase penH from Penicillium thymicola.